Reading from the N-terminus, the 461-residue chain is Cysteine--tRNA ligase (461 aa).

Zn(2+) is bound at residue C28. A 'HIGH' region motif is present at residues 30–40; it reads ITVYDLCHIGH. Residues C209, H234, and E238 each coordinate Zn(2+). The 'KMSKS' region signature appears at 266 to 270; the sequence is KMSKS. K269 serves as a coordination point for ATP.

Belongs to the class-I aminoacyl-tRNA synthetase family. Monomer. Requires Zn(2+) as cofactor.

The protein resides in the cytoplasm. It carries out the reaction tRNA(Cys) + L-cysteine + ATP = L-cysteinyl-tRNA(Cys) + AMP + diphosphate. The chain is Cysteine--tRNA ligase from Escherichia fergusonii (strain ATCC 35469 / DSM 13698 / CCUG 18766 / IAM 14443 / JCM 21226 / LMG 7866 / NBRC 102419 / NCTC 12128 / CDC 0568-73).